The following is a 233-amino-acid chain: MSFAAAQATYVLHSRPYKETSALVDFFTPLGRLRAVLRGARGKAGALARPFVPLEAEWRGRGELKTVARLESAGVPNLLNGQALFSGLYLNELLIRLLPAEDPQPEIFAHYAATLPLLAAGRPIEPLLRAFEWRLLEQLGYGFALDVDIDGRPIEPQALYQLLPEAGLEPVAQLQPGLFQGSELLSMADADWSAPGALAAAKRLMRQALAPHLGGRPLVSRELFMNRKESPRD.

This sequence belongs to the RecO family.

Functionally, involved in DNA repair and RecF pathway recombination. The polypeptide is DNA repair protein RecO (Pseudomonas aeruginosa (strain LESB58)).